The following is a 149-amino-acid chain: Large ribosomal subunit protein eL19 (149 aa).

Residues 67 to 90 (KRKLQKRKGRRRGHGSRKGAKGAR) form a disordered region.

This sequence belongs to the eukaryotic ribosomal protein eL19 family. Part of the 50S ribosomal subunit.

Its function is as follows. Binds to the 23S rRNA. This Archaeoglobus fulgidus (strain ATCC 49558 / DSM 4304 / JCM 9628 / NBRC 100126 / VC-16) protein is Large ribosomal subunit protein eL19.